We begin with the raw amino-acid sequence, 301 residues long: Probable alpha-L-glutamate ligase 1 (301 aa).

Residues Met-104 to Glu-287 form the ATP-grasp domain. Residues Lys-141, Glu-178–Tyr-179, Asp-187, and Arg-211–Asn-213 contribute to the ATP site. 3 residues coordinate Mg(2+): Asp-248, Glu-260, and Asn-262. Positions 248, 260, and 262 each coordinate Mn(2+).

It belongs to the RimK family. Mg(2+) is required as a cofactor. Mn(2+) serves as cofactor.

The protein is Probable alpha-L-glutamate ligase 1 of Shewanella putrefaciens (strain CN-32 / ATCC BAA-453).